The primary structure comprises 445 residues: Phosphoglucosamine mutase (445 aa).

Ser99 acts as the Phosphoserine intermediate in catalysis. Positions 99, 242, 244, and 246 each coordinate Mg(2+). Phosphoserine is present on Ser99.

The protein belongs to the phosphohexose mutase family. The cofactor is Mg(2+). Activated by phosphorylation.

The enzyme catalyses alpha-D-glucosamine 1-phosphate = D-glucosamine 6-phosphate. Catalyzes the conversion of glucosamine-6-phosphate to glucosamine-1-phosphate. The protein is Phosphoglucosamine mutase of Helicobacter acinonychis (strain Sheeba).